A 342-amino-acid chain; its full sequence is Dihydroorotase (342 aa).

Zn(2+) contacts are provided by H13 and H15. Residues H15–R17 and N41 contribute to the substrate site. K97, H134, and H172 together coordinate Zn(2+). K97 carries the N6-carboxylysine modification. Position 134 (H134) interacts with substrate. L217 serves as a coordination point for substrate. D245 contributes to the Zn(2+) binding site. D245 is an active-site residue. Substrate contacts are provided by H249 and A261.

The protein belongs to the metallo-dependent hydrolases superfamily. DHOase family. Class II DHOase subfamily. As to quaternary structure, homodimer. Zn(2+) is required as a cofactor.

The catalysed reaction is (S)-dihydroorotate + H2O = N-carbamoyl-L-aspartate + H(+). Its pathway is pyrimidine metabolism; UMP biosynthesis via de novo pathway; (S)-dihydroorotate from bicarbonate: step 3/3. In terms of biological role, catalyzes the reversible cyclization of carbamoyl aspartate to dihydroorotate. This chain is Dihydroorotase, found in Shewanella amazonensis (strain ATCC BAA-1098 / SB2B).